Consider the following 59-residue polypeptide: UPF0434 protein VIBHAR_01537 (59 aa).

It belongs to the UPF0434 family.

This Vibrio campbellii (strain ATCC BAA-1116) protein is UPF0434 protein VIBHAR_01537.